Here is a 181-residue protein sequence, read N- to C-terminus: Mitochondrial inner membrane protein Mpv17 (181 aa).

4 helical membrane-spanning segments follow: residues 20 to 38, 48 to 70, 91 to 113, and 140 to 162; these read VIVSGAVCGAGDAFTQYLT, TARFTCLAAVFIAPPLNVWFRVL, FMFSPFFNAIILVNLRLLEGFSF, and LINFYFVPLNYRVILIQVVAFFW.

This sequence belongs to the peroxisomal membrane protein PXMP2/4 family.

Its subcellular location is the mitochondrion inner membrane. Involved in mitochondria homeostasis. This Caenorhabditis briggsae protein is Mitochondrial inner membrane protein Mpv17.